A 359-amino-acid chain; its full sequence is Peptide chain release factor 1 (359 aa).

Glutamine 236 is modified (N5-methylglutamine).

This sequence belongs to the prokaryotic/mitochondrial release factor family. In terms of processing, methylated by PrmC. Methylation increases the termination efficiency of RF1.

It localises to the cytoplasm. Functionally, peptide chain release factor 1 directs the termination of translation in response to the peptide chain termination codons UAG and UAA. This is Peptide chain release factor 1 from Ureaplasma parvum serovar 3 (strain ATCC 27815 / 27 / NCTC 11736).